The sequence spans 525 residues: Putative ankyrin repeat protein FPV228 (525 aa).

ANK repeat units follow at residues 39-71 (HPDN…TRDI), 72-122 (LGNT…ACNN), 123-152 (LNQT…KVNI), 156-185 (YGNT…DVNI), 190-226 (YWYS…TRCR), 227-254 (LNTT…DINA), 258-287 (NDNA…DVNM), 291-320 (RGKT…NPNI), and 324-353 (IMNT…DINH).

This is Putative ankyrin repeat protein FPV228 from Fowlpox virus (strain NVSL) (FPV).